The following is a 130-amino-acid chain: Small ribosomal subunit protein uS8 (130 aa).

The protein belongs to the universal ribosomal protein uS8 family. In terms of assembly, part of the 30S ribosomal subunit.

Functionally, one of the primary rRNA binding proteins, it binds directly to 16S rRNA central domain where it helps coordinate assembly of the platform of the 30S subunit. The chain is Small ribosomal subunit protein uS8 from Methanococcoides burtonii (strain DSM 6242 / NBRC 107633 / OCM 468 / ACE-M).